Consider the following 80-residue polypeptide: Anaphase-promoting complex subunit hcn1 (80 aa).

Met-1 is modified (N-acetylmethionine). A disordered region spans residues 26 to 54 (QTLDSESTTEEALQKNEESTRLSPEKKKI). Over residues 37 to 54 (ALQKNEESTRLSPEKKKI) the composition is skewed to basic and acidic residues.

In terms of assembly, the APC/C is composed of at least 13 subunits: apc1, apc2, nuc2, apc4, apc5, cut9, apc8, apc10, apc11, hcn1, apc13, apc14 and apc15. Interacts directly (via N-terminus) with cut9.

Its function is as follows. Component of the anaphase promoting complex/cyclosome (APC/C), a cell cycle-regulated E3 ubiquitin-protein ligase complex that controls progression through mitosis and the G1 phase of the cell cycle. The APC/C is thought to confer substrate specificity and, in the presence of ubiquitin-conjugating E2 enzymes, it catalyzes the formation of protein-ubiquitin conjugates that are subsequently degraded by the 26S proteasome. Has a role in assembling cut9 in the 20S APC/cyclosome. This chain is Anaphase-promoting complex subunit hcn1 (hcn1), found in Schizosaccharomyces pombe (strain 972 / ATCC 24843) (Fission yeast).